We begin with the raw amino-acid sequence, 549 residues long: Hydroxylamine reductase (549 aa).

The [4Fe-4S] cluster site is built by Cys3, Cys6, Cys15, and Cys21. Residues His244, Glu268, Cys313, Cys405, Cys433, Cys458, Glu492, and Lys494 each contribute to the hybrid [4Fe-2O-2S] cluster site. Cysteine persulfide is present on Cys405.

This sequence belongs to the HCP family. [4Fe-4S] cluster serves as cofactor. The cofactor is hybrid [4Fe-2O-2S] cluster.

The protein resides in the cytoplasm. It carries out the reaction A + NH4(+) + H2O = hydroxylamine + AH2 + H(+). In terms of biological role, catalyzes the reduction of hydroxylamine to form NH(3) and H(2)O. This is Hydroxylamine reductase from Gloeothece citriformis (strain PCC 7424) (Cyanothece sp. (strain PCC 7424)).